Reading from the N-terminus, the 275-residue chain is Large ribosomal subunit protein uL2 (275 aa).

The interval 212-259 (RWKGIRPTNRGVTMNPVDHPHGGGEGKTSGGRHPVTPWGQPTRGYKTR) is disordered.

Belongs to the universal ribosomal protein uL2 family. In terms of assembly, part of the 50S ribosomal subunit. Forms a bridge to the 30S subunit in the 70S ribosome.

One of the primary rRNA binding proteins. Required for association of the 30S and 50S subunits to form the 70S ribosome, for tRNA binding and peptide bond formation. It has been suggested to have peptidyltransferase activity; this is somewhat controversial. Makes several contacts with the 16S rRNA in the 70S ribosome. In Acidobacterium capsulatum (strain ATCC 51196 / DSM 11244 / BCRC 80197 / JCM 7670 / NBRC 15755 / NCIMB 13165 / 161), this protein is Large ribosomal subunit protein uL2.